We begin with the raw amino-acid sequence, 303 residues long: N-acetyl-D-glucosamine kinase (303 aa).

ATP is bound by residues 4–11 and 133–140; these read GFDVGGTK and GFGGGLIY. Residues H157, C177, C179, and C184 each contribute to the Zn(2+) site.

It belongs to the ROK (NagC/XylR) family. NagK subfamily.

It catalyses the reaction N-acetyl-D-glucosamine + ATP = N-acetyl-D-glucosamine 6-phosphate + ADP + H(+). It functions in the pathway cell wall biogenesis; peptidoglycan recycling. Catalyzes the phosphorylation of N-acetyl-D-glucosamine (GlcNAc) derived from cell-wall degradation, yielding GlcNAc-6-P. This chain is N-acetyl-D-glucosamine kinase, found in Vibrio vulnificus (strain CMCP6).